The chain runs to 29 residues: Cytochrome b6-f complex subunit 8 (29 aa).

The helical transmembrane segment at 3–23 (IVSIAWAALMVVFSFSLSLVV) threads the bilayer.

Belongs to the PetN family. As to quaternary structure, the 4 large subunits of the cytochrome b6-f complex are cytochrome b6, subunit IV (17 kDa polypeptide, PetD), cytochrome f and the Rieske protein, while the 4 small subunits are PetG, PetL, PetM and PetN. The complex functions as a dimer.

Its subcellular location is the plastid. It is found in the chloroplast thylakoid membrane. Component of the cytochrome b6-f complex, which mediates electron transfer between photosystem II (PSII) and photosystem I (PSI), cyclic electron flow around PSI, and state transitions. The chain is Cytochrome b6-f complex subunit 8 from Phaseolus vulgaris (Kidney bean).